Here is a 93-residue protein sequence, read N- to C-terminus: Small ribosomal subunit protein uS19 (93 aa).

It belongs to the universal ribosomal protein uS19 family.

Protein S19 forms a complex with S13 that binds strongly to the 16S ribosomal RNA. This chain is Small ribosomal subunit protein uS19, found in Clavibacter michiganensis subsp. michiganensis (strain NCPPB 382).